Here is a 318-residue protein sequence, read N- to C-terminus: Ubiquitin-like domain-containing CTD phosphatase 1 (318 aa).

The Ubiquitin-like domain maps to 3–81; it reads LSLIIKWGGQ…IMMMGTREES (79 aa). The 162-residue stretch at 133 to 294 folds into the FCP1 homology domain; the sequence is PREGKKLLVL…LKLTQYLKEI (162 aa). Residues Asp143, Asp145, and Asp253 each contribute to the Mg(2+) site.

Requires Mg(2+) as cofactor.

It is found in the nucleus. It carries out the reaction O-phospho-L-seryl-[protein] + H2O = L-seryl-[protein] + phosphate. The enzyme catalyses O-phospho-L-threonyl-[protein] + H2O = L-threonyl-[protein] + phosphate. In terms of biological role, dephosphorylates 26S nuclear proteasomes, thereby decreasing their proteolytic activity. Recruited to the 19S regulatory particle of the 26S proteasome where it dephosphorylates 19S component PSMC2 which impairs PSMC2 ATPase activity and disrupts 26S proteasome assembly. Has also been reported to stimulate the proteolytic activity of the 26S proteasome. This chain is Ubiquitin-like domain-containing CTD phosphatase 1 (UBLCP1), found in Gallus gallus (Chicken).